The following is a 97-amino-acid chain: Large ribosomal subunit protein uL23 (97 aa).

This sequence belongs to the universal ribosomal protein uL23 family. Part of the 50S ribosomal subunit. Contacts protein L29, and trigger factor when it is bound to the ribosome.

Its function is as follows. One of the early assembly proteins it binds 23S rRNA. One of the proteins that surrounds the polypeptide exit tunnel on the outside of the ribosome. Forms the main docking site for trigger factor binding to the ribosome. The polypeptide is Large ribosomal subunit protein uL23 (Sinorhizobium medicae (strain WSM419) (Ensifer medicae)).